Consider the following 255-residue polypeptide: tRNA (guanine-N(1)-)-methyltransferase (255 aa).

Residues Gly-113 and 133–138 (VGDFVL) contribute to the S-adenosyl-L-methionine site.

This sequence belongs to the RNA methyltransferase TrmD family. Homodimer.

The protein localises to the cytoplasm. The enzyme catalyses guanosine(37) in tRNA + S-adenosyl-L-methionine = N(1)-methylguanosine(37) in tRNA + S-adenosyl-L-homocysteine + H(+). Functionally, specifically methylates guanosine-37 in various tRNAs. This chain is tRNA (guanine-N(1)-)-methyltransferase, found in Francisella philomiragia subsp. philomiragia (strain ATCC 25017 / CCUG 19701 / FSC 153 / O#319-036).